An 833-amino-acid chain; its full sequence is Protein translocase subunit SecA (833 aa).

Residues Q87, 105–109 (GEGKT), and D494 each bind ATP. Residues 789-816 (PAAVAYSGGEAEAGPAQPHREDPKVGRN) are disordered. Over residues 806–815 (PHREDPKVGR) the composition is skewed to basic and acidic residues. Residues C819, C821, C830, and C831 each coordinate Zn(2+).

It belongs to the SecA family. As to quaternary structure, monomer and homodimer. Part of the essential Sec protein translocation apparatus which comprises SecA, SecYEG and auxiliary proteins SecDF-YajC and YidC. Zn(2+) is required as a cofactor.

The protein resides in the cell inner membrane. It is found in the cytoplasm. The catalysed reaction is ATP + H2O + cellular proteinSide 1 = ADP + phosphate + cellular proteinSide 2.. Its function is as follows. Part of the Sec protein translocase complex. Interacts with the SecYEG preprotein conducting channel. Has a central role in coupling the hydrolysis of ATP to the transfer of proteins into and across the cell membrane, serving as an ATP-driven molecular motor driving the stepwise translocation of polypeptide chains across the membrane. In Nitratidesulfovibrio vulgaris (strain ATCC 29579 / DSM 644 / CCUG 34227 / NCIMB 8303 / VKM B-1760 / Hildenborough) (Desulfovibrio vulgaris), this protein is Protein translocase subunit SecA.